The following is a 126-amino-acid chain: Fluoride-specific ion channel FluC (126 aa).

A run of 4 helical transmembrane segments spans residues 4–24 (SILA…FLGL), 36–56 (GTLA…ALFA), 68–88 (LIIT…AEVV), and 99–119 (AFAA…AGIA). Na(+) contacts are provided by Gly75 and Thr78.

Belongs to the fluoride channel Fluc/FEX (TC 1.A.43) family.

It localises to the cell inner membrane. It carries out the reaction fluoride(in) = fluoride(out). Na(+) is not transported, but it plays an essential structural role and its presence is essential for fluoride channel function. In terms of biological role, fluoride-specific ion channel. Important for reducing fluoride concentration in the cell, thus reducing its toxicity. In Chromobacterium violaceum (strain ATCC 12472 / DSM 30191 / JCM 1249 / CCUG 213 / NBRC 12614 / NCIMB 9131 / NCTC 9757 / MK), this protein is Fluoride-specific ion channel FluC.